The following is a 180-amino-acid chain: ATP synthase subunit b 2 (180 aa).

The chain crosses the membrane as a helical span at residues 33-53 (IFWLLVTLVAIYFLLTRVALP).

It belongs to the ATPase B chain family. F-type ATPases have 2 components, F(1) - the catalytic core - and F(0) - the membrane proton channel. F(1) has five subunits: alpha(3), beta(3), gamma(1), delta(1), epsilon(1). F(0) has three main subunits: a(1), b(2) and c(10-14). The alpha and beta chains form an alternating ring which encloses part of the gamma chain. F(1) is attached to F(0) by a central stalk formed by the gamma and epsilon chains, while a peripheral stalk is formed by the delta and b chains.

The protein resides in the cell inner membrane. F(1)F(0) ATP synthase produces ATP from ADP in the presence of a proton or sodium gradient. F-type ATPases consist of two structural domains, F(1) containing the extramembraneous catalytic core and F(0) containing the membrane proton channel, linked together by a central stalk and a peripheral stalk. During catalysis, ATP synthesis in the catalytic domain of F(1) is coupled via a rotary mechanism of the central stalk subunits to proton translocation. Its function is as follows. Component of the F(0) channel, it forms part of the peripheral stalk, linking F(1) to F(0). The b'-subunit is a diverged and duplicated form of b found in plants and photosynthetic bacteria. In Cereibacter sphaeroides (strain ATCC 17025 / ATH 2.4.3) (Rhodobacter sphaeroides), this protein is ATP synthase subunit b 2 (atpF2).